The sequence spans 51 residues: Large ribosomal subunit protein eL39y (51 aa).

The interval 1-21 (MPSHKSFMIKKKLGKKMRQNR) is disordered. Positions 7–19 (FMIKKKLGKKMRQ) are enriched in basic residues.

This sequence belongs to the eukaryotic ribosomal protein eL39 family.

This Arabidopsis thaliana (Mouse-ear cress) protein is Large ribosomal subunit protein eL39y (RPL39B).